We begin with the raw amino-acid sequence, 245 residues long: Nicotinamide/nicotinic acid mononucleotide adenylyltransferase 3 (245 aa).

2 residues coordinate NAD(+): serine 14 and phenylalanine 15. The ATP site is built by histidine 22 and lysine 56. NAD(+)-binding residues include tryptophan 90, threonine 93, glycine 134, and aspartate 136. Residue lysine 139 participates in ATP binding. NAD(+)-binding residues include leucine 146, tryptophan 147, arginine 166, and asparagine 197. Position 202-205 (202-205 (TYVR)) interacts with ATP.

This sequence belongs to the eukaryotic NMN adenylyltransferase family. Homotetramer. Mg(2+) serves as cofactor.

It localises to the mitochondrion. It carries out the reaction beta-nicotinamide D-ribonucleotide + ATP + H(+) = diphosphate + NAD(+). The enzyme catalyses nicotinate beta-D-ribonucleotide + ATP + H(+) = deamido-NAD(+) + diphosphate. It participates in cofactor biosynthesis; NAD(+) biosynthesis; NAD(+) from nicotinamide D-ribonucleotide: step 1/1. It functions in the pathway cofactor biosynthesis; NAD(+) biosynthesis; deamido-NAD(+) from nicotinate D-ribonucleotide: step 1/1. Activity is strongly inhibited by galotannin. Inhibited by P1-(adenosine-5')-P4-(nicotinic-acid-riboside-5')-tetraphosphate (Nap4AD). Catalyzes the formation of NAD(+) from nicotinamide mononucleotide (NMN) and ATP. Can also use the deamidated form; nicotinic acid mononucleotide (NaMN) as substrate with the same efficiency. Can use triazofurin monophosphate (TrMP) as substrate. Can also use GTP and ITP as nucleotide donors. Also catalyzes the reverse reaction, i.e. the pyrophosphorolytic cleavage of NAD(+). For the pyrophosphorolytic activity, can use NAD(+), NADH, NaAD, nicotinic acid adenine dinucleotide phosphate (NHD), nicotinamide guanine dinucleotide (NGD) as substrates. Fails to cleave phosphorylated dinucleotides NADP(+), NADPH and NaADP(+). Protects against axonal degeneration following injury. May be involved in the maintenance of axonal integrity. Also functions as a stress-response chaperone protein that prevents toxic aggregation of proteins; this function may be independent of its NAD(+) synthesis activity. The sequence is that of Nicotinamide/nicotinic acid mononucleotide adenylyltransferase 3 from Mus musculus (Mouse).